The primary structure comprises 117 residues: HPVHNQGEFSVCDSVSVWVANKTTATDMRGNVVTVMVDVNLNNNVYKQYFFETKCKNPNPVPSGCRGIDAKHWNSYCTTTDTFVRALTMERNQASWRFIRINTACVCVISRKNDNFG.

Intrachain disulfides connect C12-C77, C55-C105, and C65-C107. An N-linked (GlcNAc...) asparagine glycan is attached at N21.

It belongs to the NGF-beta family. Homodimer; non-covalently linked. As to expression, expressed by the venom gland.

The protein localises to the secreted. Its function is as follows. Nerve growth factor is important for the development and maintenance of the sympathetic and sensory nervous systems. It stimulates division and differentiation of sympathetic and embryonic sensory neurons as well as basal forebrain cholinergic neurons in the brain. Its relevance in the snake venom is not clear. However, it has been shown to inhibit metalloproteinase-dependent proteolysis of platelet glycoprotein Ib alpha, suggesting a metalloproteinase inhibition to prevent metalloprotease autodigestion and/or protection against prey proteases. Binds a lipid between the two protein chains in the homodimer. The lipid-bound form promotes histamine relase from mouse mast cells, contrary to the lipid-free form. This is Venom nerve growth factor from Daboia russelii (Russel's viper).